Reading from the N-terminus, the 105-residue chain is uncharacterized protein (105 aa).

The protein to C.jejuni CJ1463.

This is an uncharacterized protein from Helicobacter pylori (strain ATCC 700392 / 26695) (Campylobacter pylori).